A 354-amino-acid polypeptide reads, in one-letter code: Rhodopsin (354 aa).

Topologically, residues 1–36 (MNGTEGENFYVPMSNKTGVVRSPFDYPQYYLGEPWM) are extracellular. Residues asparagine 2 and asparagine 15 are each glycosylated (N-linked (GlcNAc...) asparagine). Residues 37–61 (FSALAAYMFFLILTGLPVNFLTLFV) traverse the membrane as a helical segment. Over 62–73 (TIQHKKLRQPLN) the chain is Cytoplasmic. The helical transmembrane segment at 74–96 (YILLNLAVSDLFMVFGGFTTTII) threads the bilayer. Residues 97 to 110 (TSMNGYFIFGPAGC) are Extracellular-facing. Cysteine 110 and cysteine 187 are oxidised to a cystine. A helical transmembrane segment spans residues 111 to 133 (NFEGFFATLGGEVGLWCLVVLAI). Residues 134 to 136 (ERY) carry the 'Ionic lock' involved in activated form stabilization motif. The Cytoplasmic portion of the chain corresponds to 134-152 (ERYMVVCKPMANFRFGSQH). The chain crosses the membrane as a helical span at residues 153–173 (AIIGVVFTWIMALSCAGPPLV). Residues 174–202 (GWSRYIPEGLQCSCGVDYYTMKPEVNNES) lie on the Extracellular side of the membrane. The chain crosses the membrane as a helical span at residues 203-224 (FVIYMFVVHFTIPLIVIFFCYG). Over 225-252 (RLVCTVKEAAAQQQESESTQRAEREVTR) the chain is Cytoplasmic. A helical membrane pass occupies residues 253 to 274 (MVIIMVVAFLICWVPYASVAFY). At 275–286 (IFINQGCDFTPF) the chain is on the extracellular side. The helical transmembrane segment at 287 to 308 (FMTVPAFFAKSSAVYNPLIYIL) threads the bilayer. Lysine 296 carries the post-translational modification N6-(retinylidene)lysine. The Cytoplasmic portion of the chain corresponds to 309 to 354 (MNKQFRNCMITTICLGKNPFEEEESTSASASKTEASSVSSSQVAPA). Residue cysteine 322 is the site of S-palmitoyl cysteine attachment. Residues 333–354 (STSASASKTEASSVSSSQVAPA) form a disordered region. The segment covering 334–354 (TSASASKTEASSVSSSQVAPA) has biased composition (low complexity).

This sequence belongs to the G-protein coupled receptor 1 family. Opsin subfamily. In terms of processing, phosphorylated on some or all of the serine and threonine residues present in the C-terminal region. Contains one covalently linked retinal chromophore.

It localises to the membrane. It is found in the cell projection. The protein localises to the cilium. The protein resides in the photoreceptor outer segment. Photoreceptor required for image-forming vision at low light intensity. While most salt water fish species use retinal as chromophore, most freshwater fish use 3-dehydroretinal, or a mixture of retinal and 3-dehydroretinal. Light-induced isomerization of 11-cis to all-trans retinal triggers a conformational change that activates signaling via G-proteins. Subsequent receptor phosphorylation mediates displacement of the bound G-protein alpha subunit by arrestin and terminates signaling. In Leucoraja erinaceus (Little skate), this protein is Rhodopsin (rho).